Here is a 525-residue protein sequence, read N- to C-terminus: GMP synthase [glutamine-hydrolyzing] (525 aa).

The Glutamine amidotransferase type-1 domain occupies 9-207; that stretch reads RILILDFGSQ…VVDICKCEKL (199 aa). C86 serves as the catalytic Nucleophile. Catalysis depends on residues H181 and E183. In terms of domain architecture, GMPS ATP-PPase spans 208 to 400; it reads WTSASIIDDA…LGLPYDMLYR (193 aa). 235–241 is an ATP binding site; it reads SGGVDSS.

Homodimer.

The enzyme catalyses XMP + L-glutamine + ATP + H2O = GMP + L-glutamate + AMP + diphosphate + 2 H(+). The protein operates within purine metabolism; GMP biosynthesis; GMP from XMP (L-Gln route): step 1/1. Catalyzes the synthesis of GMP from XMP. In Colwellia psychrerythraea (strain 34H / ATCC BAA-681) (Vibrio psychroerythus), this protein is GMP synthase [glutamine-hydrolyzing].